The following is a 350-amino-acid chain: L-threonine 3-dehydrogenase (350 aa).

C42 serves as a coordination point for Zn(2+). Residues T44 and H47 each act as charge relay system in the active site. H67, E68, C97, C100, C103, and C111 together coordinate Zn(2+). NAD(+) is bound by residues L179, E199, R204, 266 to 268 (LGL), and 291 to 292 (IT).

Belongs to the zinc-containing alcohol dehydrogenase family. Homotetramer. It depends on Zn(2+) as a cofactor.

Its subcellular location is the cytoplasm. The catalysed reaction is L-threonine + NAD(+) = (2S)-2-amino-3-oxobutanoate + NADH + H(+). The protein operates within amino-acid degradation; L-threonine degradation via oxydo-reductase pathway; glycine from L-threonine: step 1/2. In terms of biological role, catalyzes the NAD(+)-dependent oxidation of L-threonine to 2-amino-3-ketobutyrate. To a lesser extent, also catalyzes the oxidation of L-serine. This is L-threonine 3-dehydrogenase from Thermococcus kodakarensis (strain ATCC BAA-918 / JCM 12380 / KOD1) (Pyrococcus kodakaraensis (strain KOD1)).